The chain runs to 413 residues: uncharacterized protein (413 aa).

This is an uncharacterized protein from Mycoplasma pneumoniae (strain ATCC 29342 / M129 / Subtype 1) (Mycoplasmoides pneumoniae).